The sequence spans 737 residues: Autolysin (737 aa).

Over residues 1–13 (MKKESMSRIERRK) the composition is skewed to basic and acidic residues. Disordered regions lie at residues 1-28 (MKKE…KKST), 51-132 (AEAT…TDSS), and 335-360 (PSSG…SGTN). Positions 1–53 (MKKESMSRIERRKAQQRKKTPVQWKKSTTLFSSALIVSSVGTPVALLPVTAEA) are cleaved as a signal peptide. Over residues 67-117 (PTTETGLVETPTTETTPGTTEQPTTDSSTTTESTTESSKETPTTPSTEQPT) the composition is skewed to low complexity. Over residues 118–132 (ADSTTPVESGTTDSS) the composition is skewed to polar residues. The span at 339-352 (GNTGGGTVNPGTGG) shows a compositional bias: gly residues. The 44-residue stretch at 361–404 (TYYTVKSGDTLNKIAAQYGVSVANLRSWNGISGDLIFVGQKLIV) folds into the LysM 1 domain. The interval 409 to 429 (SGNTGGSGSGGSNNNQSGTNT) is disordered. Residues 410-419 (GNTGGSGSGG) are compositionally biased toward gly residues. Low complexity predominate over residues 420–429 (SNNNQSGTNT). LysM domains are found at residues 429–472 (TYYT…KLIV), 497–540 (TYYT…KIIV), 565–608 (TYYT…KIIV), 631–674 (TSYT…TIIV), and 693–736 (KRHT…TLKV).

It belongs to the glycosyl hydrolase 73 family.

Its subcellular location is the secreted. In terms of biological role, hydrolyzes the cell wall of E.faecalis and M.lysodeikticus. May play an important role in cell wall growth and cell separation. The chain is Autolysin from Enterococcus faecalis (strain ATCC 700802 / V583).